The primary structure comprises 1771 residues: Myosin-H heavy chain (1771 aa).

One can recognise a Myosin N-terminal SH3-like domain in the interval 7 to 57; sequence CGKEKVWVPNPEKGWINGDLIKEIPGEGWLVRDENGKEIKIEKDELRMQNP. The region spanning 61–840 is the Myosin motor domain; sequence EGIDDMTSLS…IIANLELLRS (780 aa). An ATP-binding site is contributed by 154-161; the sequence is GESGAGKT. The interval 690-712 is actin-binding; it reads LNSLMTTINSTNPHYIRCIKPNT. IQ domains follow at residues 843 to 872, 866 to 895, and 940 to 969; these read MINS…SSIY, TKHS…ENSA, and RIKK…EAKS. Disordered regions lie at residues 1070–1176, 1218–1282, and 1312–1343; these read EKQH…NNVD, VKKS…PINM, and LNNG…KHIQ. Over residues 1077–1111 the composition is skewed to polar residues; it reads YKNNEVVGNTSFEGSTTTNNGVTSPPKSSPASPIR. Over residues 1112 to 1139 the composition is skewed to low complexity; that stretch reads NSINSNSDTTISGSSDDSIDNTDSLILS. A compositionally biased stretch (basic and acidic residues) spans 1143 to 1153; the sequence is HKGEDRKRNHE. Positions 1180–1224 form a coiled coil; the sequence is RRQFNELEKEYKELKQMDETHKQYIESLKLQITQLEEKVKKSSSH. Over residues 1253–1281 the composition is skewed to low complexity; the sequence is NSSSHHQQQQQQHNISPSNSITSTTSPIN. The Dilute domain occupies 1427–1695; the sequence is TGVLDPIETN…LTSLMDSPKY (269 aa).

Belongs to the TRAFAC class myosin-kinesin ATPase superfamily. Myosin family. Myosin I heavy chain is single-headed. Dimer of a heavy and a light chain. Inability to self-assemble into filaments.

Myosin is a protein that binds to actin and has ATPase activity that is activated by actin. This chain is Myosin-H heavy chain (myoH), found in Dictyostelium discoideum (Social amoeba).